The sequence spans 338 residues: Large ribosomal subunit protein uL3 (338 aa).

Disordered regions lie at residues 230–256 and 315–338; these read HRKGHRRTGTIGPQAPALMFTQPRPGQ and PARPPRRAPPTTEPQVVWVSSQQP.

It belongs to the universal ribosomal protein uL3 family. In terms of assembly, part of the 50S ribosomal subunit. Forms a cluster with proteins L14 and L24e.

Functionally, one of the primary rRNA binding proteins, it binds directly near the 3'-end of the 23S rRNA, where it nucleates assembly of the 50S subunit. The sequence is that of Large ribosomal subunit protein uL3 from Pyrobaculum arsenaticum (strain DSM 13514 / JCM 11321 / PZ6).